We begin with the raw amino-acid sequence, 441 residues long: MTVLDDHFPQGDDETVVPTSSSIPILSQMRQIVIKKRLLISFLLTFFILALSSASILTYFFFRSKSITNFKSLAIEHIESHYPSMDPSKRAGFVEEIVKIRQTGKITSDAESELDMLIEFDAFVEKYKKVHRSFDQRVQRFLTFRKNYHIVKTHKPTEPYSLDLNKFSDLSDEEFKALYPVITPPKTYTSLSKHLEFKKMSHKNPIYISKLKKAKGIEEIKDLSLITGENLNWARTDAVSPIKDQGDHCGSCWAFSSIASVESLYRLYKNKSYFLSEQELVNCDKSSMGCAGGLPITALEYIHSKGVSFESEVPYTGIVSPCKPSIKNKVFIDSISILKGNDVVNKSLVISPTVVGIAVTKELKLYSGGIFTGKCGGELNHAVLLVGEGVDHETGMRYWIIKNSWGEDWGENGFLRLQRTKKGLDKCGILTFGLNPILYSS.

An intrachain disulfide couples C249 to C290. Residue C252 is part of the active site. 2 N-linked (GlcNAc...) asparagine glycosylation sites follow: N270 and N345. Residues H381 and N403 contribute to the active site.

This sequence belongs to the peptidase C1 family.

The sequence is that of Cysteine proteinase (TACP) from Theileria annulata.